The sequence spans 886 residues: Translation initiation factor IF-2 (886 aa).

Disordered regions lie at residues 46–91 (LDHL…VEVR) and 121–297 (EQQK…HGFT). A compositionally biased stretch (polar residues) spans 72–82 (STLSVTGSTGK). 3 stretches are compositionally biased toward basic and acidic residues: residues 130–163 (AELK…AERK), 175–239 (AKSE…DHHL), and 246–260 (REAE…EQGT). The 170-residue stretch at 386 to 555 (PRAPVVTVMG…LNQSELLELT (170 aa)) folds into the tr-type G domain. A G1 region spans residues 395–402 (GHVDHGKT). 395–402 (GHVDHGKT) lines the GTP pocket. Positions 420 to 424 (GITQH) are G2. The tract at residues 441–444 (DTPG) is G3. GTP-binding positions include 441–445 (DTPGH) and 495–498 (NKMD). The tract at residues 495-498 (NKMD) is G4. The interval 531-533 (SAK) is G5.

This sequence belongs to the TRAFAC class translation factor GTPase superfamily. Classic translation factor GTPase family. IF-2 subfamily.

The protein localises to the cytoplasm. In terms of biological role, one of the essential components for the initiation of protein synthesis. Protects formylmethionyl-tRNA from spontaneous hydrolysis and promotes its binding to the 30S ribosomal subunits. Also involved in the hydrolysis of GTP during the formation of the 70S ribosomal complex. The sequence is that of Translation initiation factor IF-2 from Pseudoalteromonas translucida (strain TAC 125).